A 270-amino-acid polypeptide reads, in one-letter code: Glucosamine-6-phosphate deaminase (270 aa).

Residue D68 is the Proton acceptor; for enolization step of the active site. D145 (for ring-opening step) is an active-site residue. The active-site Proton acceptor; for ring-opening step is the H147. E152 acts as the For ring-opening step in catalysis.

It belongs to the glucosamine/galactosamine-6-phosphate isomerase family. NagB subfamily.

It catalyses the reaction alpha-D-glucosamine 6-phosphate + H2O = beta-D-fructose 6-phosphate + NH4(+). It functions in the pathway amino-sugar metabolism; N-acetylneuraminate degradation; D-fructose 6-phosphate from N-acetylneuraminate: step 5/5. Its function is as follows. Catalyzes the reversible isomerization-deamination of glucosamine 6-phosphate (GlcN6P) to form fructose 6-phosphate (Fru6P) and ammonium ion. The sequence is that of Glucosamine-6-phosphate deaminase from Bifidobacterium longum (strain DJO10A).